We begin with the raw amino-acid sequence, 145 residues long: Fatty acid-binding protein homolog 4 (145 aa).

Belongs to the calycin superfamily. Fatty-acid binding protein (FABP) family.

The chain is Fatty acid-binding protein homolog 4 (lbp-4) from Caenorhabditis elegans.